Reading from the N-terminus, the 77-residue chain is RNA-binding protein Hfq (77 aa).

The 60-residue stretch at 9 to 68 (DPFLNALRKEHIPVAIYLVNGIKLQGQIESFDQFVILLKNTVSQMVYKHAISTVVPARAI) folds into the Sm domain.

Belongs to the Hfq family. Homohexamer.

Its function is as follows. RNA chaperone that binds small regulatory RNA (sRNAs) and mRNAs to facilitate mRNA translational regulation in response to envelope stress, environmental stress and changes in metabolite concentrations. Also binds with high specificity to tRNAs. The sequence is that of RNA-binding protein Hfq from Psychromonas ingrahamii (strain DSM 17664 / CCUG 51855 / 37).